A 423-amino-acid polypeptide reads, in one-letter code: Ferrochelatase, mitochondrial (423 aa).

Residues M1–Q54 constitute a mitochondrion transit peptide. Residue K57 is modified to N6-acetyllysine. Residues R115, Y123, and S130 each coordinate protoporphyrin IX. N6-succinyllysine is present on K138. C196 is a binding site for [2Fe-2S] cluster. Residues H230 and D383 contribute to the active site. [2Fe-2S] cluster contacts are provided by C403, C406, and C411. K415 is modified (N6-acetyllysine; alternate). Position 415 is an N6-succinyllysine; alternate (K415).

The protein belongs to the ferrochelatase family. In terms of assembly, homodimer. Homotetramer. Interacts with PGRMC1; the interaction results in decreased FECH activity. Interacts with ABCB10 and SLC25A37; this interaction forms an oligomeric complex. Forms a complex with ABCB7 and ABCB10, where a dimeric FECH bridges ABCB7 and ABCB10 homodimers; this complex may be required for cellular iron homeostasis, mitochondrial function and heme biosynthesis. Interacts with ABCB7 and ABCB10. [2Fe-2S] cluster is required as a cofactor.

It localises to the mitochondrion inner membrane. The enzyme catalyses heme b + 2 H(+) = protoporphyrin IX + Fe(2+). It functions in the pathway porphyrin-containing compound metabolism; protoheme biosynthesis; protoheme from protoporphyrin-IX: step 1/1. Inhibited by nitric oxide (NO). The 2Fe-2S cluster could act as a NO sensor. In terms of biological role, catalyzes the ferrous insertion into protoporphyrin IX and participates in the terminal step in the heme biosynthetic pathway. This Homo sapiens (Human) protein is Ferrochelatase, mitochondrial.